Reading from the N-terminus, the 763-residue chain is MYVYTMENVPPSTNYLYNPKIVYNDHDIEFNVNYMPPLELDLGMAEINDIDNSINNFTNDTIIINPHTNFNSRIDGIYNINGKPIQSITDLYNLINTIFYDLIDVIIKSTLPIFNEHILYRVIGSKSLELYTNPVINNVKILTYDIEIVGTNNEIVLFLEKITMQLNAYINYKYGPNRYFIRNILRKYNLIDETCNWHYENESNNMFKFGFIKTTNSYQPCIFIHLILKKNLFTTGLVNNSNQTNNNHNVIYYPCVKFYSSKIKYKPITIANINYGRLPLIINKLLDEINTRYYNKELLDNLLNVNYFICNPIIQQQYCSENIKNCFDKNFSSAYYTDKYLSDFIPTKTNIKIVKDILNQYYGTYLFEFIKTHNCRSVFDSVLNPFNTNDKKQFINKIVDIVRNVDENNDRSLYRYTQEDHIPINLYCQMRNVGLLNDPKILDLIENFHQTKNDVDNLDNIYGILSGITEYTNSIDHLFKDEFDVVSVQTFLYFNAPNGQIIDSSNLTMDIGSIIYMPNFLSTSYVFFKDIHKFLSPVKVLYKIKIKKDIMRPLNWILVDKYSQLSNEKEILIKSGSFFVIESIEYLPVEKINESEYYNIKVITMRLCYDMDDAISHASNFGTEKLLYGYVNSNNIIGGSSNSQIKKISGPIKNITIINTNTLIIDPELFRTTSLNNYNDILNSYVSIYALLCPLLTNIYNKISFIHKKITLNYNSQKNSEKNLPIFDIPNIYSDSESHLDNLFYNKYRKYKTKYIYHKYKSN.

The 228-residue stretch at 380 to 607 (DSVLNPFNTN…YNIKVITMRL (228 aa)) folds into the TR mART core domain. Residues 684–700 (SYVSIYALLCPLLTNIY) traverse the membrane as a helical segment.

It localises to the membrane. This is an uncharacterized protein from Acanthamoeba polyphaga mimivirus (APMV).